We begin with the raw amino-acid sequence, 298 residues long: UDP-N-acetylenolpyruvoylglucosamine reductase (298 aa).

An FAD-binding PCMH-type domain is found at Arg-26 to Gly-190. The active site involves Arg-170. Ser-219 (proton donor) is an active-site residue. Residue Glu-289 is part of the active site.

It belongs to the MurB family. The cofactor is FAD.

Its subcellular location is the cytoplasm. It catalyses the reaction UDP-N-acetyl-alpha-D-muramate + NADP(+) = UDP-N-acetyl-3-O-(1-carboxyvinyl)-alpha-D-glucosamine + NADPH + H(+). The protein operates within cell wall biogenesis; peptidoglycan biosynthesis. Cell wall formation. The polypeptide is UDP-N-acetylenolpyruvoylglucosamine reductase (Alkalilimnicola ehrlichii (strain ATCC BAA-1101 / DSM 17681 / MLHE-1)).